The sequence spans 258 residues: Alpha-hydroxynitrile lyase (258 aa).

Active-site proton donor/acceptor residues include Ser81 and His236.

This sequence belongs to the AB hydrolase superfamily. Hydroxynitrile lyase family. In terms of assembly, homodimer.

The enzyme catalyses (R)-mandelonitrile = benzaldehyde + hydrogen cyanide. Its function is as follows. Involved in cyanogenesis, the release of HCN from injured tissues. Displays R-selective hydroxynitrile lyase activity. Also accepts nitromethane (MeNO2) as a donor in a reaction with aromatic aldehydes to yield (R)-beta-nitro alcohols. This Arabidopsis thaliana (Mouse-ear cress) protein is Alpha-hydroxynitrile lyase.